A 490-amino-acid polypeptide reads, in one-letter code: Sushi domain-containing protein 4 (490 aa).

Residues 1–20 (MYHGMNPSNGDGFLEQQLQQ) are disordered. The N-terminal stretch at 1–41 (MYHGMNPSNGDGFLEQQLQQQQPQSPQRLLAVILWFQLALC) is a signal peptide. Residues 42–319 (FGPAQLTGGF…PSTHETLLTT (278 aa)) lie on the Extracellular side of the membrane. 4 consecutive Sushi domains span residues 55–119 (NVCA…VCIQ), 120–179 (EDCR…ICQG), 178–239 (QGCL…RCLA), and 241–304 (EVCP…YCIK). Intrachain disulfides connect Cys-57–Cys-99, Cys-85–Cys-117, Cys-122–Cys-165, Cys-147–Cys-177, Cys-180–Cys-224, Cys-210–Cys-237, Cys-243–Cys-289, and Cys-274–Cys-302. Asn-104 and Asn-134 each carry an N-linked (GlcNAc...) asparagine glycan. Asn-192 carries N-linked (GlcNAc...) asparagine glycosylation. The chain crosses the membrane as a helical span at residues 320-340 (WKIVAFTATSVLLVLLLVILA). The Cytoplasmic portion of the chain corresponds to 341–490 (RMFQTKFKAH…DEIPLMEEDP (150 aa)). Positions 394-490 (YPASVGQGCP…DEIPLMEEDP (97 aa)) are disordered. 2 stretches are compositionally biased toward polar residues: residues 430–444 (CDSTSGSSEMLQSLY) and 461–475 (DTISSTAGEVASTSP). The segment covering 479–490 (IADEIPLMEEDP) has biased composition (acidic residues).

As to expression, high expression in brain and eye, with weaker expression in spinal cord and testis. Detected in white matter of brain and in the outer segments of photoreceptors.

The protein resides in the membrane. Its function is as follows. Acts as a complement inhibitor by disrupting the formation of the classical C3 convertase. Isoform 3 inhibits the classical complement pathway, while membrane-bound isoform 1 inhibits deposition of C3b via both the classical and alternative complement pathways. This chain is Sushi domain-containing protein 4 (Susd4), found in Mus musculus (Mouse).